Reading from the N-terminus, the 212-residue chain is Ribosomal RNA small subunit methyltransferase G (212 aa).

S-adenosyl-L-methionine is bound by residues Gly-80, Leu-85, 131 to 132, and Arg-146; that span reads AE.

It belongs to the methyltransferase superfamily. RNA methyltransferase RsmG family.

It is found in the cytoplasm. It carries out the reaction guanosine(527) in 16S rRNA + S-adenosyl-L-methionine = N(7)-methylguanosine(527) in 16S rRNA + S-adenosyl-L-homocysteine. Functionally, specifically methylates the N7 position of guanine in position 527 of 16S rRNA. In Xanthomonas campestris pv. campestris (strain 8004), this protein is Ribosomal RNA small subunit methyltransferase G.